Here is a 160-residue protein sequence, read N- to C-terminus: Eukaryotic translation initiation factor 5A-3 (160 aa).

The segment covering 1 to 12 (MSDEEHHFESKA) has biased composition (basic and acidic residues). Positions 1–21 (MSDEEHHFESKADAGASKTYP) are disordered. Residue Lys-52 is modified to Hypusine.

The protein belongs to the eIF-5A family. In terms of processing, lys-52 undergoes hypusination, a unique post-translational modification that consists in the addition of a butylamino group from spermidine to lysine side chain, leading to the formation of the unusual amino acid hypusine. eIF-5As are the only known proteins to undergo this modification, which is essential for their function.

In terms of biological role, translation factor that promotes translation elongation and termination, particularly upon ribosome stalling at specific amino acid sequence contexts. Binds between the exit (E) and peptidyl (P) site of the ribosome and promotes rescue of stalled ribosome: specifically required for efficient translation of polyproline-containing peptides as well as other motifs that stall the ribosome. Acts as a ribosome quality control (RQC) cofactor by joining the RQC complex to facilitate peptidyl transfer during CAT tailing step. This chain is Eukaryotic translation initiation factor 5A-3 (EIF5A3), found in Solanum tuberosum (Potato).